The sequence spans 202 residues: Transmembrane 4 L6 family member 4 (202 aa).

Topologically, residues 1 to 9 are cytoplasmic; the sequence is MCTGGCARC. The helical transmembrane segment at 10 to 30 threads the bilayer; sequence LGGTLIPLAFFGFLANILLFF. Residues 31–45 lie on the Extracellular side of the membrane; the sequence is PGGKVIDDNDHLSQE. A helical transmembrane segment spans residues 46–66; that stretch reads IWFFGGILGSGVLMIFPALVF. Residues 67–93 are Cytoplasmic-facing; it reads LGLKNNDCCGCCGNEGCGKRFAMFTST. Residues 94-114 traverse the membrane as a helical segment; sequence IFAVVGFLGAGYSFIISAISI. The Extracellular portion of the chain corresponds to 115–158; that stretch reads NKGPKCLMANSTWGYPFHDGDYLNDEALWNKCREPLNVVPWNLT. Residues N124 and N156 are each glycosylated (N-linked (GlcNAc...) asparagine). The chain crosses the membrane as a helical span at residues 159–179; that stretch reads LFSILLVVGGIQMVLCAIQVV. Residues 180-202 are Cytoplasmic-facing; it reads NGLLGTLCGDCQCCGCCGGDGPV.

This sequence belongs to the L6 tetraspanin family. In terms of processing, N-glycosylated. Glycosylation is required for the growth inhibitory effect. As to expression, jejunum and liver.

The protein resides in the membrane. Its function is as follows. Regulates the adhesive and proliferative status of intestinal epithelial cells. Can mediate density-dependent cell proliferation. This Homo sapiens (Human) protein is Transmembrane 4 L6 family member 4 (TM4SF4).